Consider the following 122-residue polypeptide: Phosphoribosyl-ATP pyrophosphatase (122 aa).

This sequence belongs to the PRA-PH family.

The protein localises to the cytoplasm. The catalysed reaction is 1-(5-phospho-beta-D-ribosyl)-ATP + H2O = 1-(5-phospho-beta-D-ribosyl)-5'-AMP + diphosphate + H(+). It participates in amino-acid biosynthesis; L-histidine biosynthesis; L-histidine from 5-phospho-alpha-D-ribose 1-diphosphate: step 2/9. This is Phosphoribosyl-ATP pyrophosphatase from Cupriavidus metallidurans (strain ATCC 43123 / DSM 2839 / NBRC 102507 / CH34) (Ralstonia metallidurans).